Reading from the N-terminus, the 185-residue chain is Ribonuclease HII (185 aa).

In terms of domain architecture, RNase H type-2 spans Met1 to Leu185. A divalent metal cation contacts are provided by Asp7, Glu8, and Asp99.

This sequence belongs to the RNase HII family. Mn(2+) is required as a cofactor. It depends on Mg(2+) as a cofactor.

Its subcellular location is the cytoplasm. The catalysed reaction is Endonucleolytic cleavage to 5'-phosphomonoester.. Endonuclease that specifically degrades the RNA of RNA-DNA hybrids. This is Ribonuclease HII from Francisella tularensis subsp. novicida (strain U112).